Reading from the N-terminus, the 305-residue chain is Putative lipid kinase SAB0675c (305 aa).

The region spanning 3–139 (NKYTHGVLFY…YDVIKINNQY (137 aa)) is the DAGKc domain. ATP-binding positions include Ser-44, 74 to 80 (GDGTVNE), and Thr-101. Mg(2+) is bound by residues Ser-220, Asp-223, and Glu-225. Glu-281 acts as the Proton acceptor in catalysis.

The protein belongs to the diacylglycerol/lipid kinase family. The cofactor is Mg(2+).

Functionally, may catalyze the ATP-dependent phosphorylation of lipids other than diacylglycerol (DAG). The sequence is that of Putative lipid kinase SAB0675c from Staphylococcus aureus (strain bovine RF122 / ET3-1).